Reading from the N-terminus, the 392-residue chain is MAASEQPQAGELLAKARRAFLEEFGAEPELAVSAPGRVNLIGEHTDYNRGLVLPMALELVTVLVGSPRVDGLVSLLTTSEDADEPRRLQFPLPTSQRPLEPGTPHWANYVKGVIQHYPAAPLPGFSAVVVSSVPLGGGLSSSASLEVATYTFLQQLCPDSGTIAARAQVCQRAEHSFAGVPCGIMDQLIALLGQRGHALLIDCRSLETSLVPLSDPKLAVLITNSNVRHSLGSSEYPLRRRQCEEVARALGKESLREVQLEELEAGRDLMSTEAFRRARHVVGEIQRTAQAAAALRRGDYRAFGRLMVESHHSLRDDYEVSCPELDQLVEAALSAPGVYGSRMTGGGFGGCTVTLLEASAAPRVMQHIQEQYHGTATFYLSQAADGAKVLHF.

Positions 37, 43, 44, and 46 each coordinate alpha-D-galactose. Residues glycine 136, glycine 138, serine 140, and serine 141 each coordinate ATP. Aspartate 186 serves as a coordination point for alpha-D-galactose. The active-site Proton acceptor is aspartate 186. The residue at position 230 (serine 230) is a Phosphoserine. Tyrosine 236 contacts alpha-D-galactose.

This sequence belongs to the GHMP kinase family. GalK subfamily. Homodimer.

The enzyme catalyses alpha-D-galactose + ATP = alpha-D-galactose 1-phosphate + ADP + H(+). It participates in carbohydrate metabolism; galactose metabolism. Catalyzes the transfer of a phosphate from ATP to alpha-D-galactose and participates in the first committed step in the catabolism of galactose. The chain is Galactokinase (GALK1) from Bos taurus (Bovine).